A 460-amino-acid chain; its full sequence is Elongation factor 1-alpha (460 aa).

Glycine 2 is modified (n,N,N-trimethylglycine). Lysine 3 carries the N6,N6-dimethyllysine; alternate modification. Lysine 3 is subject to N6-methyllysine; alternate. The 236-residue stretch at 6-241 (KTHINVVVIG…DSIEPPKRPT (236 aa)) folds into the tr-type G domain. The segment at 15 to 22 (GHVDSGKS) is G1. 15 to 22 (GHVDSGKS) serves as a coordination point for GTP. Position 31 is an N6-methyllysine (lysine 31). Residues 71–75 (GITID) are G2. N6,N6,N6-trimethyllysine is present on lysine 80. Residues 92 to 95 (DAPG) are G3. GTP is bound by residues 92-96 (DAPGH) and 154-157 (NKMD). The G4 stretch occupies residues 154-157 (NKMD). The G5 stretch occupies residues 193–195 (SGF). N6,N6-dimethyllysine; alternate is present on lysine 317. Position 317 is an N6-methyllysine; alternate (lysine 317). N6-methyllysine is present on lysine 391.

The protein belongs to the TRAFAC class translation factor GTPase superfamily. Classic translation factor GTPase family. EF-Tu/EF-1A subfamily.

It is found in the cytoplasm. This protein promotes the GTP-dependent binding of aminoacyl-tRNA to the A-site of ribosomes during protein biosynthesis. The polypeptide is Elongation factor 1-alpha (TEF) (Podospora anserina (Pleurage anserina)).